Consider the following 102-residue polypeptide: Large ribosomal subunit protein bL28 (102 aa).

Positions 1-20 (MSRRCELTAKGPQVGHKVSH) are disordered.

It belongs to the bacterial ribosomal protein bL28 family.

This is Large ribosomal subunit protein bL28 from Bradyrhizobium sp. (strain ORS 278).